The chain runs to 27 residues: Cruzioseptin-14 (27 aa).

Expressed by the skin glands.

It is found in the secreted. In terms of biological role, has antimicrobial activity. In Cruziohyla calcarifer (Splendid leaf frog), this protein is Cruzioseptin-14.